The following is a 334-amino-acid chain: Ornithine carbamoyltransferase (334 aa).

Residues 56 to 59, Gln-83, Arg-107, and 134 to 137 each bind carbamoyl phosphate; these read STRT and HPTQ. L-ornithine contacts are provided by residues Asn-168, Asp-232, and 236-237; that span reads SM. Residues 274-275 and Arg-320 contribute to the carbamoyl phosphate site; that span reads CL.

Belongs to the aspartate/ornithine carbamoyltransferase superfamily. OTCase family.

The protein resides in the cytoplasm. It carries out the reaction carbamoyl phosphate + L-ornithine = L-citrulline + phosphate + H(+). The protein operates within amino-acid biosynthesis; L-arginine biosynthesis; L-arginine from L-ornithine and carbamoyl phosphate: step 1/3. Its function is as follows. Reversibly catalyzes the transfer of the carbamoyl group from carbamoyl phosphate (CP) to the N(epsilon) atom of ornithine (ORN) to produce L-citrulline. The polypeptide is Ornithine carbamoyltransferase (Escherichia coli O45:K1 (strain S88 / ExPEC)).